The chain runs to 668 residues: Fructose-1,6-bisphosphatase class 3 (668 aa).

It belongs to the FBPase class 3 family. Mn(2+) is required as a cofactor.

It catalyses the reaction beta-D-fructose 1,6-bisphosphate + H2O = beta-D-fructose 6-phosphate + phosphate. The protein operates within carbohydrate biosynthesis; gluconeogenesis. The chain is Fructose-1,6-bisphosphatase class 3 from Clostridium botulinum (strain Okra / Type B1).